Here is a 784-residue protein sequence, read N- to C-terminus: MKKRIPTLLATMIASALYSHQGLAADLASQCMLGVPSYDRPLVKGDTNDLPVTINADNAKGNYPDDAVFTGNVDIMQGNSRLQADEVQLHQKQAEGQPEPVRTVDALGNVHYDDNQVILKGPKGWANLNTKDTNVWEGDYQMVGRQGRGKADLMKQRGENRYTILENGSFTSCLPGSDTWSVVGSEVIHDREEQVAEIWNARFKVGPVPIFYSPYLQLPVGDKRRSGFLIPNAKYTTKNYFEFYLPYYWNIAPNMDATITPHYMHRRGNIMWENEFRYLTQAGAGLMELDYLPSDKVYEDEHPKEGDKHRWLFYWQHSGVMDQVWRFNVDYTKVSDSSYFNDFDSKYGSSTDGYATQKFSVGYAVQNFDATVSTKQFQVFNDQNTSSYSAEPQLDVNYYHNDLGPFDTRIYGQAVHFVNTKDNMPEATRVHLEPTISLPLSNRWGSLNTEAKLMATHYQQTNLDWYNANNSKKLEDSVNRVMPQFKVDGKLVFERDMAMLAPGYTQTLEPRVQYLYVPYRDQSGIYNYDSSLLQSDYNGLFRDRTYGGLDRIASANQVTTGVTTRIYDDAAVERFNVSVGQIYYFTESRTGDDNIKWENDDKTGSLVWAGDTYWRISERWGLRSGVQYDTRLDSVATSSSSLEYRRDQDRLVQLNYRYASPEYIQATLPSYYSTAEQYKNGINQVGAVASWPIADRWSIVGAYYFDTNSSKPADQMLGLQYNSCCYAIRVGYERKLNGWDNDKQHAIYDNAIGFNIELRGLSSNYGLGTQEMLRSNILPYQSSM.

The signal sequence occupies residues 1–24 (MKKRIPTLLATMIASALYSHQGLA). Intrachain disulfides connect cysteine 31/cysteine 724 and cysteine 173/cysteine 725.

This sequence belongs to the LptD family. Component of the lipopolysaccharide transport and assembly complex. Interacts with LptE and LptA. In terms of processing, contains two intramolecular disulfide bonds.

Its subcellular location is the cell outer membrane. Its function is as follows. Together with LptE, is involved in the assembly of lipopolysaccharide (LPS) at the surface of the outer membrane. In Salmonella typhi, this protein is LPS-assembly protein LptD.